A 270-amino-acid polypeptide reads, in one-letter code: Methionine-rich protein (270 aa).

The first 18 residues, Met-1–Ala-18, serve as a signal peptide directing secretion. Residues Gln-31–Ser-52 show a composition bias toward polar residues. The disordered stretch occupies residues Gln-31–Pro-95. The span at Pro-56–Pro-95 shows a compositional bias: low complexity.

Component of the acid-soluble organic matrix of calcified layers of the shell (at protein level).

The protein resides in the secreted. The sequence is that of Methionine-rich protein from Lottia gigantea (Giant owl limpet).